The sequence spans 426 residues: Serine/threonine-protein kinase ssn3 (426 aa).

Residues 41-368 (YHIVGFISSG…AQEALEHPYF (328 aa)) enclose the Protein kinase domain. Residues 47 to 55 (ISSGTYGRV) and lysine 71 contribute to the ATP site. Catalysis depends on aspartate 173, which acts as the Proton acceptor. Residues 390-426 (RVTQDDNDIRSGSLPGTKRSGLPDDSLMGRAAKRLKE) are disordered.

The protein belongs to the protein kinase superfamily. CMGC Ser/Thr protein kinase family. CDC2/CDKX subfamily. Component of the srb8-11 complex, a regulatory module of the Mediator complex. Mg(2+) is required as a cofactor.

The protein localises to the nucleus. It catalyses the reaction L-seryl-[protein] + ATP = O-phospho-L-seryl-[protein] + ADP + H(+). The enzyme catalyses L-threonyl-[protein] + ATP = O-phospho-L-threonyl-[protein] + ADP + H(+). The catalysed reaction is [DNA-directed RNA polymerase] + ATP = phospho-[DNA-directed RNA polymerase] + ADP + H(+). Its function is as follows. Component of the srb8-11 complex. The srb8-11 complex is a regulatory module of the Mediator complex which is itself involved in regulation of basal and activated RNA polymerase II-dependent transcription. The srb8-11 complex may be involved in the transcriptional repression of a subset of genes regulated by Mediator. It may inhibit the association of the Mediator complex with RNA polymerase II to form the holoenzyme complex. The srb8-11 complex phosphorylates the C-terminal domain (CTD) of the largest subunit of RNA polymerase II. In Aspergillus clavatus (strain ATCC 1007 / CBS 513.65 / DSM 816 / NCTC 3887 / NRRL 1 / QM 1276 / 107), this protein is Serine/threonine-protein kinase ssn3 (ssn3).